The sequence spans 383 residues: MGCFGSAGSKQSDSNSSEDTKSQKRRSDAITRQLQKDKQVYRATHRLLLLGAGESGKSTIVKQMRILHVNGFSDSERKQKIEDIKKNIRDAILTITGAMSTLTPPIQLEKPENQARVDYIQDYASGPDFNYPPEFYEHTEELWKDRGVQQTYERSNEYQLIDCAKYFLDRVSEIKQPNYTPTEQDILRCRVLTSGIFETRFQVDKVNFHMFDVGGQRDERRKWIQCFNDVTAIIFVTACSSYNMVLREDPTQNRLRESLDLFKSIWNNRWLRTISVILFLNKQDLLAEKIKAGKSKLSDYFGEFNRYQTPADAVCEMGEDPEVIRAKYFIRDEFLRISTASGDGKHYCYPHFTCAVDTENIKRVFNDCRDIIQRMHLRQYELL.

The interval 1-31 (MGCFGSAGSKQSDSNSSEDTKSQKRRSDAIT) is disordered. Gly-2 is lipidated: N-palmitoyl glycine. A lipid anchor (S-palmitoyl cysteine) is attached at Cys-3. Residues 8 to 17 (GSKQSDSNSS) are compositionally biased toward polar residues. Residues 18 to 31 (EDTKSQKRRSDAIT) are compositionally biased toward basic and acidic residues. One can recognise a G-alpha domain in the interval 43–383 (ATHRLLLLGA…RMHLRQYELL (341 aa)). Positions 46–59 (RLLLLGAGESGKST) are G1 motif. Residues 51 to 58 (GAGESGKS), 187 to 193 (LRCRVLT), 212 to 216 (DVGGQ), 281 to 284 (NKQD), and Ala-355 each bind GTP. Ser-58 and Thr-193 together coordinate Mg(2+). The tract at residues 185-193 (DILRCRVLT) is G2 motif. The tract at residues 208-217 (FHMFDVGGQR) is G3 motif. Residues 277 to 284 (ILFLNKQD) are G4 motif. The interval 353–358 (TCAVDT) is G5 motif.

Belongs to the G-alpha family. G(s) subfamily. G proteins are composed of 3 units; alpha, beta and gamma. The alpha chain contains the guanine nucleotide binding site.

Functionally, guanine nucleotide-binding proteins (G proteins) are involved as modulators or transducers in various transmembrane signaling systems. The G(s) protein is involved in hormonal regulation of adenylate cyclase: it activates the cyclase. Participates in olfactory signal transduction. The protein is Guanine nucleotide-binding protein G(s) subunit alpha of Anopheles gambiae (African malaria mosquito).